The sequence spans 157 residues: Phosphopantetheine adenylyltransferase (157 aa).

It belongs to the eukaryotic CoaD family. In terms of assembly, monomer.

The protein resides in the cytoplasm. It carries out the reaction (R)-4'-phosphopantetheine + ATP + H(+) = 3'-dephospho-CoA + diphosphate. It functions in the pathway cofactor biosynthesis; coenzyme A biosynthesis. Its function is as follows. Reversibly transfers an adenylyl group from ATP to 4'-phosphopantetheine, yielding dephospho-CoA (dPCoA) and pyrophosphate. The polypeptide is Phosphopantetheine adenylyltransferase (Pyrococcus abyssi (strain GE5 / Orsay)).